The sequence spans 101 residues: Ascorbate-specific PTS system EIIB component (101 aa).

The region spanning 3-96 (VRILAVCGNG…KLLEVIKEHF (94 aa)) is the PTS EIIB type-2 domain. The Phosphocysteine intermediate role is filled by Cys-9. At Cys-9 the chain carries Phosphocysteine.

It is found in the cytoplasm. It catalyses the reaction N(pros)-phospho-L-histidyl-[protein] + L-ascorbate(out) = L-ascorbate 6-phosphate(in) + L-histidyl-[protein]. Its function is as follows. The phosphoenolpyruvate-dependent sugar phosphotransferase system (sugar PTS), a major carbohydrate active transport system, catalyzes the phosphorylation of incoming sugar substrates concomitantly with their translocation across the cell membrane. The enzyme II UlaABC PTS system is involved in ascorbate transport. This chain is Ascorbate-specific PTS system EIIB component (ulaB), found in Salmonella choleraesuis (strain SC-B67).